The chain runs to 211 residues: MVTKEQLKEKLKLYVILDRKLGNGVPLRQQAQLAIAGGATAIQLRDKEMKGRDYYQAALVIKDVCKENNVLFIVNDRLDVALAAEADGVHLGQEDLPLHAAKKLAPPGFIIGISAVNVEQAKLAEKGGADYLGVGDVFGTASKPDAKLTGVDMLKMICQSTSLPCVAIGGINVNNAKIVLDAGAIGIAVISAVVSQKDITGAAKALRELIP.

4-amino-2-methyl-5-(diphosphooxymethyl)pyrimidine is bound by residues Q43 to K47 and N75. 2 residues coordinate Mg(2+): D76 and D95. Position 114 (S114) interacts with 4-amino-2-methyl-5-(diphosphooxymethyl)pyrimidine. T140–S142 is a binding site for 2-[(2R,5Z)-2-carboxy-4-methylthiazol-5(2H)-ylidene]ethyl phosphate. K143 is a 4-amino-2-methyl-5-(diphosphooxymethyl)pyrimidine binding site. 2-[(2R,5Z)-2-carboxy-4-methylthiazol-5(2H)-ylidene]ethyl phosphate contacts are provided by residues G170 and I190–S191.

Belongs to the thiamine-phosphate synthase family. Requires Mg(2+) as cofactor.

The enzyme catalyses 2-[(2R,5Z)-2-carboxy-4-methylthiazol-5(2H)-ylidene]ethyl phosphate + 4-amino-2-methyl-5-(diphosphooxymethyl)pyrimidine + 2 H(+) = thiamine phosphate + CO2 + diphosphate. It carries out the reaction 2-(2-carboxy-4-methylthiazol-5-yl)ethyl phosphate + 4-amino-2-methyl-5-(diphosphooxymethyl)pyrimidine + 2 H(+) = thiamine phosphate + CO2 + diphosphate. It catalyses the reaction 4-methyl-5-(2-phosphooxyethyl)-thiazole + 4-amino-2-methyl-5-(diphosphooxymethyl)pyrimidine + H(+) = thiamine phosphate + diphosphate. Its pathway is cofactor biosynthesis; thiamine diphosphate biosynthesis; thiamine phosphate from 4-amino-2-methyl-5-diphosphomethylpyrimidine and 4-methyl-5-(2-phosphoethyl)-thiazole: step 1/1. Its function is as follows. Condenses 4-methyl-5-(beta-hydroxyethyl)thiazole monophosphate (THZ-P) and 2-methyl-4-amino-5-hydroxymethyl pyrimidine pyrophosphate (HMP-PP) to form thiamine monophosphate (TMP). The polypeptide is Thiamine-phosphate synthase (Coprothermobacter proteolyticus (strain ATCC 35245 / DSM 5265 / OCM 4 / BT)).